The following is a 483-amino-acid chain: UDP-glucosyl transferase 73B2 (483 aa).

H22 serves as the catalytic Proton acceptor. H22 provides a ligand contact to an anthocyanidin. The Charge relay role is filled by D133. The UDP-alpha-D-glucose site is built by A355, Q357, H372, W375, N376, S377, and E380. Residue A395 participates in an anthocyanidin binding. UDP-alpha-D-glucose-binding residues include E396 and Q397.

Belongs to the UDP-glycosyltransferase family. As to expression, expressed in roots and flowers.

It carries out the reaction a 7-O-hydroxy-flavonol + UDP-alpha-D-glucose = a flavonol 7-O-beta-D-glucoside + UDP + H(+). It participates in secondary metabolite biosynthesis; flavonoid biosynthesis. Functionally, catalyzes the glycosylation of flavonoids from UDP-glucose. Uses a wide range of flavonoid substrates including flavonols (quercetin, kaempferol, isorhamnetin, 3-OH 7,2',4'-MeO-flavone), flavones (luteolin, apigenin), flavanones (naringenin, hesperetin), flavanonols (taxifolin), isoflavones (genistein, daidzein), flavonol glycosides (quercitrin, isoquercitrin, rutin), and chalcones (isoliquiritigenin). Specific for the C-7 position, with a 20-fold lower activity for the C-3 position. The protein is UDP-glucosyl transferase 73B2 (UGT73B2) of Arabidopsis thaliana (Mouse-ear cress).